Here is a 490-residue protein sequence, read N- to C-terminus: ATP synthase subunit beta, chloroplastic (490 aa).

170–177 is an ATP binding site; it reads GGAGVGKT.

This sequence belongs to the ATPase alpha/beta chains family. In terms of assembly, F-type ATPases have 2 components, CF(1) - the catalytic core - and CF(0) - the membrane proton channel. CF(1) has five subunits: alpha(3), beta(3), gamma(1), delta(1), epsilon(1). CF(0) has four main subunits: a(1), b(1), b'(1) and c(9-12).

The protein resides in the plastid. It is found in the chloroplast thylakoid membrane. It carries out the reaction ATP + H2O + 4 H(+)(in) = ADP + phosphate + 5 H(+)(out). Its function is as follows. Produces ATP from ADP in the presence of a proton gradient across the membrane. The catalytic sites are hosted primarily by the beta subunits. This Ipomoea wrightii (Wright's morning glory) protein is ATP synthase subunit beta, chloroplastic.